We begin with the raw amino-acid sequence, 64 residues long: U-poneritoxin(01)-Om1a (64 aa).

Residues 1–27 form the signal peptide; that stretch reads MKPSGLTFAFLVVFMMAIMYNSVQVTA. Residues 28 to 45 constitute a propeptide that is removed on maturation; the sequence is DADADAEAEALANALAEA. A Methionine amide modification is found at Met62.

Post-translationally, truncated sequences of this peptide have also been found in the venom. It is possible they have been cleaved in the venom. As to expression, expressed by the venom gland.

The protein localises to the secreted. Its function is as follows. Antimicrobial peptide with activities against E.coli (MIC=1.3 uM), S.aureus (MIC=3.1 uM), and S.cerevisiae (MIC=50 uM). Also shows histamine-releasing activity (32.9% at 10 uM). Does not show hemolytic activity, even at 50 uM. It is a short peptide for which no alpha-helical region has been predicted. The chain is U-poneritoxin(01)-Om1a from Odontomachus monticola (Trap-jaw ant).